A 639-amino-acid polypeptide reads, in one-letter code: 3D-(3,5/4)-trihydroxycyclohexane-1,2-dione hydrolase (639 aa).

Glu-65 contributes to the thiamine diphosphate binding site. A thiamine pyrophosphate binding region spans residues 437–517; it reads SLPGDLQRMW…INIILFDNSG (81 aa). Positions 488 and 515 each coordinate Mg(2+).

This sequence belongs to the TPP enzyme family. Mg(2+) is required as a cofactor. It depends on thiamine diphosphate as a cofactor.

The catalysed reaction is 3D-3,5/4-trihydroxycyclohexane-1,2-dione + H2O = 5-deoxy-D-glucuronate + H(+). The protein operates within polyol metabolism; myo-inositol degradation into acetyl-CoA; acetyl-CoA from myo-inositol: step 3/7. Functionally, involved in the cleavage of the C1-C2 bond of 3D-(3,5/4)-trihydroxycyclohexane-1,2-dione (THcHDO) to yield 5-deoxy-glucuronate (5DG). This Geobacillus thermodenitrificans (strain NG80-2) protein is 3D-(3,5/4)-trihydroxycyclohexane-1,2-dione hydrolase.